The sequence spans 568 residues: Circadian clock protein KaiC2 (568 aa).

KaiC domains lie at 11–250 (IKCP…SVSQ) and 251–485 (ERIS…LTGT). 2 positions are modified to phosphoserine; by autocatalysis: Ser423 and Ser424.

Belongs to the KaiC family. Multimerizes, probably forming homohexamers, no interaction with KaiC1 or KaiC3 is seen.

The enzyme catalyses L-seryl-[protein] + ATP = O-phospho-L-seryl-[protein] + ADP + H(+). The catalysed reaction is L-threonyl-[protein] + ATP = O-phospho-L-threonyl-[protein] + ADP + H(+). It catalyses the reaction ATP + H2O = ADP + phosphate + H(+). Functionally, autophosphorylates independently of KaiA. The protein is Circadian clock protein KaiC2 of Synechocystis sp. (strain ATCC 27184 / PCC 6803 / Kazusa).